A 411-amino-acid polypeptide reads, in one-letter code: Trigger factor (411 aa).

In terms of domain architecture, PPIase FKBP-type spans 162 to 240 (EDLVVIDYTT…IKEVKRRQNI (79 aa)).

It belongs to the FKBP-type PPIase family. Tig subfamily.

It is found in the cytoplasm. It carries out the reaction [protein]-peptidylproline (omega=180) = [protein]-peptidylproline (omega=0). Functionally, involved in protein export. Acts as a chaperone by maintaining the newly synthesized protein in an open conformation. Functions as a peptidyl-prolyl cis-trans isomerase. This chain is Trigger factor, found in Thermodesulfovibrio yellowstonii (strain ATCC 51303 / DSM 11347 / YP87).